Here is a 632-residue protein sequence, read N- to C-terminus: Chaperone protein HtpG (632 aa).

Residues 1 to 339 (MTQQTMSFQA…SSDLPLNVSR (339 aa)) form an a; substrate-binding region. The b stretch occupies residues 340 to 559 (EILQESRDVK…DNDMSGYLQR (220 aa)). Residues 560–632 (MLKAAGQSAP…TNALLLSRAA (73 aa)) are c.

It belongs to the heat shock protein 90 family. As to quaternary structure, homodimer.

Its subcellular location is the cytoplasm. Its function is as follows. Molecular chaperone. Has ATPase activity. In Burkholderia mallei (strain NCTC 10247), this protein is Chaperone protein HtpG.